A 76-amino-acid chain; its full sequence is U-actitoxin-Avd8c (76 aa).

Positions 1 to 16 are cleaved as a signal peptide; sequence LVIVFVVLLGVPLISA. Positions 17–33 are excised as a propeptide; that stretch reads NEEELLAILQDQRNDAR.

This sequence belongs to the sea anemone 8 toxin family.

Its subcellular location is the secreted. The protein localises to the nematocyst. The chain is U-actitoxin-Avd8c from Anemonia viridis (Snakelocks anemone).